Reading from the N-terminus, the 71-residue chain is Beta-defensin 9 (71 aa).

A signal peptide spans 1–23 (MRTLCSLLLICCLLFSYDTPVVG). Intrachain disulfides connect Cys-37–Cys-66, Cys-44–Cys-59, and Cys-49–Cys-67.

This sequence belongs to the beta-defensin family.

Its subcellular location is the secreted. Has antibacterial activity. In Rattus norvegicus (Rat), this protein is Beta-defensin 9 (Defb9).